We begin with the raw amino-acid sequence, 480 residues long: ATP synthase subunit beta (480 aa).

Residue 152-159 coordinates ATP; the sequence is GGAGVGKT.

The protein belongs to the ATPase alpha/beta chains family. In terms of assembly, F-type ATPases have 2 components, CF(1) - the catalytic core - and CF(0) - the membrane proton channel. CF(1) has five subunits: alpha(3), beta(3), gamma(1), delta(1), epsilon(1). CF(0) has three main subunits: a(1), b(2) and c(9-12). The alpha and beta chains form an alternating ring which encloses part of the gamma chain. CF(1) is attached to CF(0) by a central stalk formed by the gamma and epsilon chains, while a peripheral stalk is formed by the delta and b chains.

The protein resides in the cell membrane. The enzyme catalyses ATP + H2O + 4 H(+)(in) = ADP + phosphate + 5 H(+)(out). Functionally, produces ATP from ADP in the presence of a proton gradient across the membrane. The catalytic sites are hosted primarily by the beta subunits. The polypeptide is ATP synthase subunit beta (Wolbachia sp. subsp. Brugia malayi (strain TRS)).